The sequence spans 569 residues: Protein ste7 (569 aa).

2 disordered regions span residues 195–219 (APIT…VNSV) and 255–274 (FSVS…SPPI). A compositionally biased stretch (low complexity) spans 198–219 (TTSSATHTSQFSTSSSSSVNSV). Residues 264–274 (PQTPISMSPPI) are compositionally biased toward pro residues.

It belongs to the arrestin family.

In terms of biological role, has a role in promoting meiosis whereby it is involved in establishing the mating pheromone signaling pathway. It also has a role in suppressing meiosis until the conjugation process is complete. The polypeptide is Protein ste7 (ste7) (Schizosaccharomyces pombe (strain 972 / ATCC 24843) (Fission yeast)).